The chain runs to 342 residues: MSKAYEQSGVNIHAGYEAVERMSSHVKRTMRKEVIGGLGGFGATFDLSQLNMTAPVLVSGTDGVGTKLKLAIDYGKHDSIGIDAVAMCVNDILTTGAEPLYFLDYIATNKVVPEVIEQIVKGISDACVETNTALIGGETAEMGEMYHEGEYDVAGFAVGAVEKDDYVDGSEVKEGQVVIGLASSGIHSNGYSLVRKLINESDIDLASNFDNRPFIDVFLEPTKLYVKPVLALKKEVSIKAMNHITGGGFYENIPRALPAGYAARIDTTSFPTPKIFDWLQQQGNIDTNEMYNIFNMGIGYTVIVDEKDVSRALKILAEQNVEAYQIGHIVKNESTAIELLGV.

Belongs to the AIR synthase family.

It is found in the cytoplasm. It carries out the reaction 2-formamido-N(1)-(5-O-phospho-beta-D-ribosyl)acetamidine + ATP = 5-amino-1-(5-phospho-beta-D-ribosyl)imidazole + ADP + phosphate + H(+). It functions in the pathway purine metabolism; IMP biosynthesis via de novo pathway; 5-amino-1-(5-phospho-D-ribosyl)imidazole from N(2)-formyl-N(1)-(5-phospho-D-ribosyl)glycinamide: step 2/2. The protein is Phosphoribosylformylglycinamidine cyclo-ligase of Staphylococcus aureus (strain bovine RF122 / ET3-1).